A 496-amino-acid polypeptide reads, in one-letter code: Putative ammonium transporter 1 member 5 (496 aa).

11 consecutive transmembrane segments (helical) span residues 50–70, 85–105, 131–151, 156–176, 202–222, 246–266, 284–306, 314–334, 336–356, 369–389, and 422–442; these read LLFS…LCAG, VLDA…FAFG, FFLY…GSIA, FVAY…VVSH, FAGS…GALI, LVVL…PGSF, GIGR…TLFG, WNVT…TAGC, VVDP…LIGC, LEAA…VGLF, and LVQI…LFFI. Ser485 is subject to Phosphoserine.

Belongs to the ammonia transporter channel (TC 1.A.11.2) family.

It is found in the membrane. Its function is as follows. Involved in ammonium transport. This Arabidopsis thaliana (Mouse-ear cress) protein is Putative ammonium transporter 1 member 5 (AMT1-5).